A 312-amino-acid polypeptide reads, in one-letter code: Ribonuclease Z (312 aa).

Residues His62, His64, Asp66, His67, His144, Asp215, and His273 each contribute to the Zn(2+) site. The active-site Proton acceptor is the Asp66.

The protein belongs to the RNase Z family. As to quaternary structure, homodimer. It depends on Zn(2+) as a cofactor.

It carries out the reaction Endonucleolytic cleavage of RNA, removing extra 3' nucleotides from tRNA precursor, generating 3' termini of tRNAs. A 3'-hydroxy group is left at the tRNA terminus and a 5'-phosphoryl group is left at the trailer molecule.. Its function is as follows. Zinc phosphodiesterase, which displays some tRNA 3'-processing endonuclease activity. Probably involved in tRNA maturation, by removing a 3'-trailer from precursor tRNA. The polypeptide is Ribonuclease Z (Prochlorococcus marinus (strain MIT 9515)).